Here is a 68-residue protein sequence, read N- to C-terminus: Protein transport protein Sec61 subunit gamma (68 aa).

At 1-32 (MDQVMQFVEPSRQFVKDSIRLVKRCTKPDRKE) the chain is on the cytoplasmic side. Residues 33 to 61 (FQKVAMATAIGFAIMGFIGFFVKLIHIPI) form a helical membrane-spanning segment. At 62 to 68 (NNIIVGG) the chain is on the extracellular side.

Belongs to the SecE/SEC61-gamma family. In terms of assembly, the SEC61 channel-forming translocon complex consists of channel-forming core components SEC61A1, SEC61B and SEC61G and different auxiliary components such as SEC62 and SEC63. The SEC61 channel associates with the multi-pass translocon (MPT) complex.

The protein resides in the endoplasmic reticulum membrane. Component of SEC61 channel-forming translocon complex that mediates transport of signal peptide-containing precursor polypeptides across the endoplasmic reticulum (ER). Forms a ribosome receptor and a gated pore in the ER membrane, both functions required for cotranslational translocation of nascent polypeptides. The SEC61 channel is also involved in ER membrane insertion of transmembrane proteins: it mediates membrane insertion of the first few transmembrane segments of proteins, while insertion of subsequent transmembrane regions of multi-pass membrane proteins is mediated by the multi-pass translocon (MPT) complex. The protein is Protein transport protein Sec61 subunit gamma (sec61g) of Harpagifer antarcticus (Antarctic spiny plunderfish).